Here is a 405-residue protein sequence, read N- to C-terminus: Cellobiose 2-epimerase (405 aa).

The protein belongs to the cellobiose 2-epimerase family.

It carries out the reaction D-cellobiose = beta-D-glucosyl-(1-&gt;4)-D-mannopyranose. In terms of biological role, catalyzes the reversible epimerization of cellobiose to 4-O-beta-D-glucopyranosyl-D-mannose (Glc-Man). Can also epimerize lactose to epilactose. This is Cellobiose 2-epimerase (ce13) from Eubacterium cellulosolvens.